Consider the following 55-residue polypeptide: UPF0391 membrane protein Meso_3110 (55 aa).

Transmembrane regions (helical) follow at residues 4-24 (WALVFLVVAIIAGALGFGGIA) and 30-50 (IAQILFYIFLILLVVSLLFGL).

This sequence belongs to the UPF0391 family.

It localises to the cell membrane. The protein is UPF0391 membrane protein Meso_3110 of Chelativorans sp. (strain BNC1).